Reading from the N-terminus, the 211-residue chain is Adenylyl-sulfate kinase (211 aa).

An ATP-binding site is contributed by 32–39 (GLSASGKS). S107 serves as the catalytic Phosphoserine intermediate.

It belongs to the APS kinase family. In terms of assembly, homodimer.

The catalysed reaction is adenosine 5'-phosphosulfate + ATP = 3'-phosphoadenylyl sulfate + ADP + H(+). It participates in sulfur metabolism; hydrogen sulfide biosynthesis; sulfite from sulfate: step 2/3. Its function is as follows. Catalyzes the synthesis of activated sulfate. This chain is Adenylyl-sulfate kinase, found in Penicillium chrysogenum (Penicillium notatum).